We begin with the raw amino-acid sequence, 164 residues long: Cytochrome c-type biogenesis protein CcmE (164 aa).

Topologically, residues 1–8 are cytoplasmic; the sequence is MNPRRKSR. A helical; Signal-anchor for type II membrane protein transmembrane segment spans residues 9-29; sequence LYLAIVVLIGVALTATLMLYA. Residues 30–164 lie on the Periplasmic side of the membrane; that stretch reads LRSNIDLFYT…ATPQNEGAKS (135 aa). Residues His-130 and Tyr-134 each contribute to the heme site. Over residues 131-148 the composition is skewed to basic and acidic residues; the sequence is DEKYTPPEVADAMKENHK. The tract at residues 131–164 is disordered; the sequence is DEKYTPPEVADAMKENHKGPASAYATPQNEGAKS. A compositionally biased stretch (polar residues) spans 155–164; it reads ATPQNEGAKS.

The protein belongs to the CcmE/CycJ family.

The protein resides in the cell inner membrane. Its function is as follows. Heme chaperone required for the biogenesis of c-type cytochromes. Transiently binds heme delivered by CcmC and transfers the heme to apo-cytochromes in a process facilitated by CcmF and CcmH. The polypeptide is Cytochrome c-type biogenesis protein CcmE (Serratia proteamaculans (strain 568)).